The following is a 74-amino-acid chain: Translational regulator CsrA (74 aa).

This sequence belongs to the CsrA/RsmA family. As to quaternary structure, homodimer; the beta-strands of each monomer intercalate to form a hydrophobic core, while the alpha-helices form wings that extend away from the core.

The protein resides in the cytoplasm. A translational regulator that binds mRNA to regulate translation initiation and/or mRNA stability. Usually binds in the 5'-UTR at or near the Shine-Dalgarno sequence preventing ribosome-binding, thus repressing translation. Its main target seems to be the major flagellin gene, while its function is anatagonized by FliW. The chain is Translational regulator CsrA from Alkaliphilus oremlandii (strain OhILAs) (Clostridium oremlandii (strain OhILAs)).